The chain runs to 125 residues: Type-4 ice-structuring protein (125 aa).

The first 20 residues, 1–20 (MKYTLIAAIVVLALAQGTLA), serve as a signal peptide directing secretion.

It belongs to the apolipoprotein A1/A4/E family.

It localises to the secreted. Antifreeze proteins lower the blood freezing point. In Gadus morhua (Atlantic cod), this protein is Type-4 ice-structuring protein.